The sequence spans 524 residues: 2-isopropylmalate synthase (524 aa).

Positions 5-267 (VIIFDTTLRD…HTNIRHSEIH (263 aa)) constitute a Pyruvate carboxyltransferase domain. Residues D14, H202, H204, and N238 each contribute to the Mn(2+) site. Residues 392 to 524 (KLEYLGVQSG…KTDKINTESV (133 aa)) form a regulatory domain region.

It belongs to the alpha-IPM synthase/homocitrate synthase family. LeuA type 1 subfamily. Homodimer. Mn(2+) is required as a cofactor.

The protein localises to the cytoplasm. The enzyme catalyses 3-methyl-2-oxobutanoate + acetyl-CoA + H2O = (2S)-2-isopropylmalate + CoA + H(+). It functions in the pathway amino-acid biosynthesis; L-leucine biosynthesis; L-leucine from 3-methyl-2-oxobutanoate: step 1/4. Functionally, catalyzes the condensation of the acetyl group of acetyl-CoA with 3-methyl-2-oxobutanoate (2-ketoisovalerate) to form 3-carboxy-3-hydroxy-4-methylpentanoate (2-isopropylmalate). The protein is 2-isopropylmalate synthase of Aeromonas hydrophila subsp. hydrophila (strain ATCC 7966 / DSM 30187 / BCRC 13018 / CCUG 14551 / JCM 1027 / KCTC 2358 / NCIMB 9240 / NCTC 8049).